Consider the following 229-residue polypeptide: uncharacterized protein (229 aa).

7 helical membrane-spanning segments follow: residues 6 to 26 (LFFV…FLPT), 36 to 56 (LVSV…ILLA), 80 to 99 (SVYD…HRIY), 114 to 134 (VLSV…HLII), 144 to 164 (IFEY…ATML), 174 to 194 (FYYH…IYKF), and 207 to 224 (YVEA…VLSS).

The protein belongs to the mimivirus L68/R809 family.

The protein resides in the membrane. This is an uncharacterized protein from Acanthamoeba polyphaga (Amoeba).